An 86-amino-acid polypeptide reads, in one-letter code: Probable weak neurotoxin NNAM1 (86 aa).

An N-terminal signal peptide occupies residues 1-21 (MKTLLLSLVVVTIVCLDLGYT). 5 disulfide bridges follow: cysteine 24–cysteine 45, cysteine 27–cysteine 32, cysteine 38–cysteine 63, cysteine 67–cysteine 78, and cysteine 79–cysteine 84.

This sequence belongs to the three-finger toxin family. Ancestral subfamily. Orphan group II sub-subfamily. In terms of tissue distribution, expressed by the venom gland.

It is found in the secreted. Functionally, binds with low affinity to muscular (alpha-1-beta-1-delta-epsilon/CHRNA1-CHRNB1-CHRND-CHRNE) and very low affinity to neuronal (alpha-7/CHRNA7) nicotinic acetylcholine receptor (nAChR). The chain is Probable weak neurotoxin NNAM1 from Naja atra (Chinese cobra).